The sequence spans 550 residues: Chaperonin GroEL (550 aa).

ATP is bound by residues 30-33 (TLGP), Lys-51, 87-91 (DGTTT), Gly-414, and Asp-494.

The protein belongs to the chaperonin (HSP60) family. In terms of assembly, forms a cylinder of 14 subunits composed of two heptameric rings stacked back-to-back. Interacts with the co-chaperonin GroES.

The protein resides in the cytoplasm. The enzyme catalyses ATP + H2O + a folded polypeptide = ADP + phosphate + an unfolded polypeptide.. Together with its co-chaperonin GroES, plays an essential role in assisting protein folding. The GroEL-GroES system forms a nano-cage that allows encapsulation of the non-native substrate proteins and provides a physical environment optimized to promote and accelerate protein folding. The sequence is that of Chaperonin GroEL from Buchnera aphidicola subsp. Thelaxes suberi.